The chain runs to 313 residues: Putative S-adenosyl-L-methionine-dependent methyltransferase MAP_3563 (313 aa).

S-adenosyl-L-methionine-binding positions include Asp139 and 168 to 169; that span reads DL.

Belongs to the UPF0677 family.

In terms of biological role, exhibits S-adenosyl-L-methionine-dependent methyltransferase activity. In Mycolicibacterium paratuberculosis (strain ATCC BAA-968 / K-10) (Mycobacterium paratuberculosis), this protein is Putative S-adenosyl-L-methionine-dependent methyltransferase MAP_3563.